Consider the following 634-residue polypeptide: MDLWQLLLTLAVAGSSDAFSGSEATPAFFVRASQSLQILYPGLETNSSGNLKFTKCRSPELETFSCHWTDGANHSLQSPGSVQMFYIRRDIQEWKECPDYVSAGENSCYFNSSYTSVWTPYCIKLTSNGGIVDHKCFSVEDIVQPDPPVGLNWTLLNISLTEIHADILVKWEPPPNTDVKMGWIILEYELHYKELNETQWKMMDPLLVTSVPMYSLRLDKEYEVRVRTRQRNTEKYGKFSEVLLITFPQMNPSACEEDFQFPWFLIIIFGILGLTVTLFLLIFSKQQRIKMLILPPVPVPKIKGIDPDLLKEGKLEEVNTILAIHDNYKHEFYNDDSWVEFIELDIDDPDEKTEGSDTDRLLSNDHEKSLSIFGAKDDDSGRTSCYEPDILETDFHVSDMCDGTSEVAQPQRLKGEADILCLDQKNQNNSPSNDAAPASQQPSVILVEENKPRPLPIGGTESTHQAVHTQLSNPSSLANIDFYAQVSDITPAGNVVLSPGQKNKTGNPQCDTHPEVVTPSQADFIVDSAYFCEVDAKKYIALAPDVEAESHIEPSFNQEDIYITTESLTTTAGRSGTAENVPSSEIPVPDYTSIHIVQSPQGLVLNATALPLPDKEFLSSCGYVSTDQLNKIMP.

The N-terminal stretch at 1–18 is a signal peptide; the sequence is MDLWQLLLTLAVAGSSDA. At 19-260 the chain is on the extracellular side; sequence FSGSEATPAF…NPSACEEDFQ (242 aa). A glycan (N-linked (GlcNAc...) asparagine) is linked at N46. A disulfide bridge connects residues C56 and C66. A glycan (N-linked (GlcNAc...) asparagine) is linked at N73. A disulfide bridge links C97 with C108. A glycan (N-linked (GlcNAc...) asparagine) is linked at N111. A disulfide bond links C122 and C136. One can recognise a Fibronectin type-III domain in the interval 147–250; sequence PPVGLNWTLL…EVLLITFPQM (104 aa). 3 N-linked (GlcNAc...) asparagine glycosylation sites follow: N152, N157, and N196. The WSXWS motif signature appears at 236 to 240; the sequence is YGKFS. Residues 261–284 form a helical membrane-spanning segment; the sequence is FPWFLIIIFGILGLTVTLFLLIFS. Topologically, residues 285–634 are cytoplasmic; that stretch reads KQQRIKMLIL…STDQLNKIMP (350 aa). The required for JAK2 binding stretch occupies residues 290–375; that stretch reads KMLILPPVPV…HEKSLSIFGA (86 aa). The short motif at 293–301 is the Box 1 motif element; the sequence is ILPPVPVPK. Positions 336–345 match the UbE motif motif; it reads DSWVEFIELD. S337 carries the phosphoserine modification. The interval 451 to 471 is disordered; the sequence is KPRPLPIGGTESTHQAVHTQL. Over residues 460–471 the composition is skewed to polar residues; sequence TESTHQAVHTQL. 2 positions are modified to phosphotyrosine: Y483 and Y591.

The protein belongs to the type I cytokine receptor family. Type 1 subfamily. As to quaternary structure, on growth hormone (GH) binding, forms homodimers and binds JAK2 via a box 1-containing domain. The soluble form (GHBP) is produced by phorbol ester-promoted proteolytic cleavage at the cell surface (shedding) by ADAM17/TACE. Shedding is inhibited by growth hormone (GH) binding to the receptor probably due to a conformational change in GHR rendering the receptor inaccessible to ADAM17. In terms of processing, on GH binding, phosphorylated on tyrosine residues in the cytoplasmic domain by JAK2. Post-translationally, ubiquitinated by the ECS(SOCS2) complex following ligand-binding and phosphorylation by JAK2, leading to its degradation by the proteasome. Regulation by the ECS(SOCS2) complex acts as a negative feedback loop of growth hormone receptor signaling. Ubiquitination is not sufficient for GHR internalization.

It localises to the cell membrane. Its subcellular location is the secreted. Receptor for pituitary gland growth hormone (GH1) involved in regulating postnatal body growth. On ligand binding, couples to the JAK2/STAT5 pathway. Its function is as follows. The soluble form (GHBP) acts as a reservoir of growth hormone in plasma and may be a modulator/inhibitor of GH signaling. In Ovis aries (Sheep), this protein is Growth hormone receptor (GHR).